We begin with the raw amino-acid sequence, 1259 residues long: Trafficking protein particle complex subunit 10 (1259 aa).

The residue at position 708 (Ser708) is a Phosphoserine. Residues 1189 to 1222 are disordered; sequence LSVDKHGDDQPDSSSLKSRGSVHSACSSEHKGLP.

Belongs to the TRAPPC10 family. Specific component of the multisubunit TRAPP II complex, which includes at least TRAPPC1, TRAPPC2, TRAPPC3, TRAPPC4, TRAPPC5, TRAPPC6A/B, TRAPPC9, TRAPPC10 and TRAPPC14. TRAPPC9, TRAPPC10 and TRAPPC14 are specific subunits of the TRAPP II complex. Interacts with TRAPPC14. As to expression, expressed in all tissues examined.

It localises to the golgi apparatus. The protein localises to the cis-Golgi network. Specific subunit of the TRAPP (transport protein particle) II complex, a highly conserved vesicle tethering complex that functions in late Golgi trafficking as a membrane tether. The sequence is that of Trafficking protein particle complex subunit 10 (TRAPPC10) from Homo sapiens (Human).